Here is a 502-residue protein sequence, read N- to C-terminus: Cytochrome P450 monooxygenase prhN (502 aa).

The chain crosses the membrane as a helical span at residues 14-30; that stretch reads SGALLIVGILLLRWALW. Asn-165 carries an N-linked (GlcNAc...) asparagine glycan. A heme-binding site is contributed by Cys-443. Asn-474 is a glycosylation site (N-linked (GlcNAc...) asparagine).

This sequence belongs to the cytochrome P450 family. Heme serves as cofactor.

It localises to the membrane. It participates in secondary metabolite biosynthesis; terpenoid biosynthesis. In terms of biological role, cytochrome P450 monooxygenase; part of the gene cluster that mediates the biosynthesis of paraherquonin, a meroterpenoid with a unique, highly congested hexacyclic molecular architecture. The first step of the pathway is the synthesis of 3,5-dimethylorsellinic acid (DMOA) by the polyketide synthase prhL. Synthesis of DMOA is followed by farnesylation by the prenyltransferase prhE, methylesterification by the methyl-transferase prhM, epoxidation of the prenyl chain by the flavin-dependent monooxygenase prhF, and cyclization of the farnesyl moiety by the terpene cyclase prhH, to yield the tetracyclic intermediate, protoaustinoid A. The short chain dehydrogenase prhI then oxidizes the C-3 alcohol group of the terpene cyclase product to transform protoaustinoid A into protoaustinoid B. The FAD-binding monooxygenase prhJ catalyzes the oxidation of protoaustinoid B into preaustinoid A which is further oxidized into preaustinoid A1 by FAD-binding monooxygenase phrK. Finally, prhA leads to berkeleydione via the berkeleyone B intermediate. PrhA is a multifunctional dioxygenase that first desaturates at C5-C6 to form berkeleyone B, followed by rearrangement of the A/B-ring to form the cycloheptadiene moiety in berkeleydione. Berkeleydione serves as the key intermediate for the biosynthesis of paraherquonin as well as many other meroterpenoids. The cytochrome P450 monooxygenases prhB, prhD, and prhN, as well as the isomerase prhC, are probably involved in the late stage of paraherquonin biosynthesis, after the production of berkeleydione. Especially prhC might be a multifunctional enzyme that catalyzes the D-ring expansion via intramolecular methoxy rearrangement, as well as the hydrolysis of the expanded D-ring. The sequence is that of Cytochrome P450 monooxygenase prhN from Penicillium brasilianum.